Here is a 265-residue protein sequence, read N- to C-terminus: Novel plant SNARE 11 (265 aa).

Residues 1–215 (MDPISAVSEE…IGRQVATDKC (215 aa)) are Cytoplasmic-facing. The stretch at 30–75 (QKLEKIKDANRQSRQLEELTDKMRDCKSLIKDFDREIKSLESGNDA) forms a coiled coil. The t-SNARE coiled-coil homology domain occupies 144–206 (NSMMDDTDQA…KKASKLVKEI (63 aa)). The helical; Anchor for type IV membrane protein transmembrane segment at 216-236 (IMAFLFLIVIGVIAIIIVKIV) threads the bilayer. Over 237–265 (NPNNKDIRDIPGVGLAPPAMNRRLLWNHY) the chain is Vesicular.

It belongs to the novel plant SNARE family. Interacts with KNOLLE to form a t-SNARE complex. Does not interact with SYP21, VTI12 or VPS45. In terms of tissue distribution, expressed in roots, stems, flower, siliques, expanding leaves, but not in mature leaves. Not limited to dividing cells.

Its subcellular location is the membrane. T-SNARE involved in diverse vesicle trafficking and membrane fusion processes, including cell plate formation. The sequence is that of Novel plant SNARE 11 (NPSN11) from Arabidopsis thaliana (Mouse-ear cress).